The primary structure comprises 438 residues: Adenosylhomocysteinase (438 aa).

Substrate is bound by residues Thr-61, Asp-137, and Glu-162. 163-165 lines the NAD(+) pocket; that stretch reads TTT. Lys-192 and Asp-196 together coordinate substrate. NAD(+)-binding positions include Asn-197, 226 to 231, Glu-249, Asn-284, 305 to 307, and Asn-352; these read GYGDVG and IGH.

The protein belongs to the adenosylhomocysteinase family. NAD(+) is required as a cofactor.

The protein localises to the cytoplasm. It carries out the reaction S-adenosyl-L-homocysteine + H2O = L-homocysteine + adenosine. It functions in the pathway amino-acid biosynthesis; L-homocysteine biosynthesis; L-homocysteine from S-adenosyl-L-homocysteine: step 1/1. May play a key role in the regulation of the intracellular concentration of adenosylhomocysteine. The protein is Adenosylhomocysteinase of Flavobacterium psychrophilum (strain ATCC 49511 / DSM 21280 / CIP 103535 / JIP02/86).